The primary structure comprises 405 residues: FK506-binding protein 4 (405 aa).

Disordered stretches follow at residues 49-117 (THNP…EDEL) and 164-297 (QQDE…PQKK). Composition is skewed to acidic residues over residues 59–84 (ESDD…EMEV), 98–117 (VEEE…EDEL), and 165–201 (QDED…EEEA). 2 stretches are compositionally biased toward basic and acidic residues: residues 238–252 (RKAE…EDAA) and 265–276 (AKVEGEKAEEKP). Residues 319-405 (GKRLGMRYIG…KFDVKLVSIN (87 aa)) form the PPIase FKBP-type domain.

Belongs to the FKBP-type PPIase family. FKBP3/4 subfamily. Binds to histones H3 and H4.

The protein localises to the nucleus. The enzyme catalyses [protein]-peptidylproline (omega=180) = [protein]-peptidylproline (omega=0). With respect to regulation, inhibited by both FK506 and rapamycin. PPIase that acts as a histone chaperone. Histone proline isomerase that increases the rate of cis-trans isomerization at prolines on the histone H3 N-terminal tail. Proline isomerization influences H3 methylation thereby regulating gene expression. The sequence is that of FK506-binding protein 4 (FPR4) from Cryptococcus neoformans var. neoformans serotype D (strain B-3501A) (Filobasidiella neoformans).